The chain runs to 306 residues: Ribonuclease Z (306 aa).

Zn(2+) is bound by residues H63, H65, D67, H68, H141, D211, and H269. D67 functions as the Proton acceptor in the catalytic mechanism.

The protein belongs to the RNase Z family. As to quaternary structure, homodimer. The cofactor is Zn(2+).

It catalyses the reaction Endonucleolytic cleavage of RNA, removing extra 3' nucleotides from tRNA precursor, generating 3' termini of tRNAs. A 3'-hydroxy group is left at the tRNA terminus and a 5'-phosphoryl group is left at the trailer molecule.. Its function is as follows. Zinc phosphodiesterase, which displays some tRNA 3'-processing endonuclease activity. Probably involved in tRNA maturation, by removing a 3'-trailer from precursor tRNA. The chain is Ribonuclease Z from Staphylococcus haemolyticus (strain JCSC1435).